The chain runs to 310 residues: Quinolinate synthase 2 (310 aa).

2 residues coordinate iminosuccinate: His30 and Ser47. Cys92 is a [4Fe-4S] cluster binding site. Residues 118–120 and Ser135 each bind iminosuccinate; that span reads YVN. Cys177 serves as a coordination point for [4Fe-4S] cluster. Residues 203–205 and Thr220 each bind iminosuccinate; that span reads HPE. Cys265 provides a ligand contact to [4Fe-4S] cluster.

Belongs to the quinolinate synthase family. Type 2 subfamily. [4Fe-4S] cluster serves as cofactor.

It is found in the cytoplasm. The enzyme catalyses iminosuccinate + dihydroxyacetone phosphate = quinolinate + phosphate + 2 H2O + H(+). It functions in the pathway cofactor biosynthesis; NAD(+) biosynthesis; quinolinate from iminoaspartate: step 1/1. Its function is as follows. Catalyzes the condensation of iminoaspartate with dihydroxyacetone phosphate to form quinolinate. In Methanosarcina acetivorans (strain ATCC 35395 / DSM 2834 / JCM 12185 / C2A), this protein is Quinolinate synthase 2.